A 574-amino-acid polypeptide reads, in one-letter code: Arginine--tRNA ligase (574 aa).

Residues 126-136 (PNIAKRMHVGH) carry the 'HIGH' region motif.

Belongs to the class-I aminoacyl-tRNA synthetase family. Monomer.

The protein resides in the cytoplasm. The enzyme catalyses tRNA(Arg) + L-arginine + ATP = L-arginyl-tRNA(Arg) + AMP + diphosphate. This is Arginine--tRNA ligase from Chloroflexus aggregans (strain MD-66 / DSM 9485).